The sequence spans 234 residues: Probable transcriptional regulatory protein Pfl01_3677 (234 aa).

This sequence belongs to the TACO1 family.

Its subcellular location is the cytoplasm. The polypeptide is Probable transcriptional regulatory protein Pfl01_3677 (Pseudomonas fluorescens (strain Pf0-1)).